The following is a 266-amino-acid chain: 4-hydroxy-tetrahydrodipicolinate reductase (266 aa).

10 to 15 (GPRGRM) is a binding site for NAD(+). Residue Lys38 participates in NADP(+) binding. NAD(+)-binding positions include 99-101 (GTT) and 125-128 (APNF). His155 serves as the catalytic Proton donor/acceptor. His156 serves as a coordination point for (S)-2,3,4,5-tetrahydrodipicolinate. The Proton donor role is filled by Lys159. 165 to 166 (GT) provides a ligand contact to (S)-2,3,4,5-tetrahydrodipicolinate.

This sequence belongs to the DapB family.

The protein localises to the cytoplasm. The enzyme catalyses (S)-2,3,4,5-tetrahydrodipicolinate + NAD(+) + H2O = (2S,4S)-4-hydroxy-2,3,4,5-tetrahydrodipicolinate + NADH + H(+). It catalyses the reaction (S)-2,3,4,5-tetrahydrodipicolinate + NADP(+) + H2O = (2S,4S)-4-hydroxy-2,3,4,5-tetrahydrodipicolinate + NADPH + H(+). It functions in the pathway amino-acid biosynthesis; L-lysine biosynthesis via DAP pathway; (S)-tetrahydrodipicolinate from L-aspartate: step 4/4. Its function is as follows. Catalyzes the conversion of 4-hydroxy-tetrahydrodipicolinate (HTPA) to tetrahydrodipicolinate. This Bacillus cereus (strain ZK / E33L) protein is 4-hydroxy-tetrahydrodipicolinate reductase.